Here is a 252-residue protein sequence, read N- to C-terminus: Trans-aconitate 2-methyltransferase (252 aa).

Belongs to the methyltransferase superfamily. Tam family.

The protein resides in the cytoplasm. It catalyses the reaction trans-aconitate + S-adenosyl-L-methionine = (E)-3-(methoxycarbonyl)pent-2-enedioate + S-adenosyl-L-homocysteine. Its function is as follows. Catalyzes the S-adenosylmethionine monomethyl esterification of trans-aconitate. In Shigella flexneri serotype 5b (strain 8401), this protein is Trans-aconitate 2-methyltransferase.